The sequence spans 246 residues: DNA polymerase sliding clamp 3 (246 aa).

It belongs to the PCNA family. The subunits circularize to form a toroid; DNA passes through its center. Replication factor C (RFC) is required to load the toroid on the DNA. Forms dimeric complexes with PCNA1 and PCNA2, and trimeric complexes with PCNA123 and PCNA323; does not form homotrimers. Crystal structures show a heterotetramer of 2 PCNA2 and 2 PCNA3, which would be large enough to clamp a Holliday junction.

Functionally, sliding clamp subunit that acts as a moving platform for DNA processing. Responsible for tethering the catalytic subunit of DNA polymerase and other proteins to DNA during high-speed replication. Both trimeric complexes inhibit DNA ligase and both 3'-5' and 5'-3' activity of Hel308 (Hjm) helicase, but stimulate Hjc, the Holliday junction cleavage enzyme. This is DNA polymerase sliding clamp 3 from Sulfurisphaera tokodaii (strain DSM 16993 / JCM 10545 / NBRC 100140 / 7) (Sulfolobus tokodaii).